A 146-amino-acid polypeptide reads, in one-letter code: Transcription antitermination protein NusB (146 aa).

Belongs to the NusB family.

Its function is as follows. Involved in transcription antitermination. Required for transcription of ribosomal RNA (rRNA) genes. Binds specifically to the boxA antiterminator sequence of the ribosomal RNA (rrn) operons. The protein is Transcription antitermination protein NusB of Herpetosiphon aurantiacus (strain ATCC 23779 / DSM 785 / 114-95).